A 358-amino-acid chain; its full sequence is Holliday junction branch migration complex subunit RuvB (358 aa).

The disordered stretch occupies residues 1-24 (MAIKRSHNSPPATEENLLTPNPTI). The span at 8–22 (NSPPATEENLLTPNP) shows a compositional bias: polar residues. The segment at 13-195 (TEENLLTPNP…FGLIQRLRFY (183 aa)) is large ATPase domain (RuvB-L). ATP-binding positions include Ile-34, Arg-35, Gly-76, Lys-79, Thr-80, Thr-81, 142-144 (EDY), Arg-185, Tyr-195, and Arg-232. Residue Thr-80 coordinates Mg(2+). The tract at residues 196 to 266 (AVEELTAIIL…LAAEGLNQLN (71 aa)) is small ATPAse domain (RuvB-S). A head domain (RuvB-H) region spans residues 269–358 (SMGLDWTDRL…KDRSLPLFEF (90 aa)). DNA-binding residues include Arg-324 and Arg-329.

This sequence belongs to the RuvB family. As to quaternary structure, homohexamer. Forms an RuvA(8)-RuvB(12)-Holliday junction (HJ) complex. HJ DNA is sandwiched between 2 RuvA tetramers; dsDNA enters through RuvA and exits via RuvB. An RuvB hexamer assembles on each DNA strand where it exits the tetramer. Each RuvB hexamer is contacted by two RuvA subunits (via domain III) on 2 adjacent RuvB subunits; this complex drives branch migration. In the full resolvosome a probable DNA-RuvA(4)-RuvB(12)-RuvC(2) complex forms which resolves the HJ.

It is found in the cytoplasm. It carries out the reaction ATP + H2O = ADP + phosphate + H(+). Functionally, the RuvA-RuvB-RuvC complex processes Holliday junction (HJ) DNA during genetic recombination and DNA repair, while the RuvA-RuvB complex plays an important role in the rescue of blocked DNA replication forks via replication fork reversal (RFR). RuvA specifically binds to HJ cruciform DNA, conferring on it an open structure. The RuvB hexamer acts as an ATP-dependent pump, pulling dsDNA into and through the RuvAB complex. RuvB forms 2 homohexamers on either side of HJ DNA bound by 1 or 2 RuvA tetramers; 4 subunits per hexamer contact DNA at a time. Coordinated motions by a converter formed by DNA-disengaged RuvB subunits stimulates ATP hydrolysis and nucleotide exchange. Immobilization of the converter enables RuvB to convert the ATP-contained energy into a lever motion, pulling 2 nucleotides of DNA out of the RuvA tetramer per ATP hydrolyzed, thus driving DNA branch migration. The RuvB motors rotate together with the DNA substrate, which together with the progressing nucleotide cycle form the mechanistic basis for DNA recombination by continuous HJ branch migration. Branch migration allows RuvC to scan DNA until it finds its consensus sequence, where it cleaves and resolves cruciform DNA. This Microcystis aeruginosa (strain NIES-843 / IAM M-2473) protein is Holliday junction branch migration complex subunit RuvB.